Reading from the N-terminus, the 308-residue chain is Bifunctional protein FolD (308 aa).

NADP(+) is bound by residues G175–S177, S200, and I241.

Belongs to the tetrahydrofolate dehydrogenase/cyclohydrolase family. As to quaternary structure, homodimer.

It catalyses the reaction (6R)-5,10-methylene-5,6,7,8-tetrahydrofolate + NADP(+) = (6R)-5,10-methenyltetrahydrofolate + NADPH. The catalysed reaction is (6R)-5,10-methenyltetrahydrofolate + H2O = (6R)-10-formyltetrahydrofolate + H(+). It functions in the pathway one-carbon metabolism; tetrahydrofolate interconversion. Functionally, catalyzes the oxidation of 5,10-methylenetetrahydrofolate to 5,10-methenyltetrahydrofolate and then the hydrolysis of 5,10-methenyltetrahydrofolate to 10-formyltetrahydrofolate. This chain is Bifunctional protein FolD, found in Jannaschia sp. (strain CCS1).